Consider the following 2302-residue polypeptide: Phosphatidylinositol phosphatase PTPRQ (2302 aa).

The N-terminal stretch at Met1–Ser18 is a signal peptide. Over Gln19–Glu1908 the chain is Extracellular. Residue Asn54 is glycosylated (N-linked (GlcNAc...) asparagine). 17 Fibronectin type-III domains span residues Pro60–Ser155, Lys159–Thr254, Pro310–Val398, Ala401–Asp501, Gly474–Thr566, Val570–Asp665, Ser670–Thr759, Ala764–Asp854, Pro859–Gly948, Pro953–Asp1053, Pro1058–Asp1151, Pro1156–Ser1243, Pro1248–Ser1341, Ala1345–Thr1431, Ala1435–Gly1539, Pro1544–Ser1642, and Pro1647–Pro1748. Asn162, Asn169, Asn318, Asn354, and Asn389 each carry an N-linked (GlcNAc...) asparagine glycan. Residues Asn733 and Asn746 are each glycosylated (N-linked (GlcNAc...) asparagine). N-linked (GlcNAc...) asparagine glycans are attached at residues Asn904, Asn998, Asn1010, and Asn1040. Asn1251 and Asn1256 each carry an N-linked (GlcNAc...) asparagine glycan. N-linked (GlcNAc...) asparagine glycosylation occurs at Asn1805. A helical transmembrane segment spans residues Ile1909–Ala1929. Residues Phe1930–Met2302 are Cytoplasmic-facing. Positions Phe2006–Leu2262 constitute a Tyrosine-protein phosphatase domain. Residue Cys2203 is the Phosphocysteine intermediate of the active site.

The protein belongs to the protein-tyrosine phosphatase family. Receptor class 2A subfamily. As to quaternary structure, interacts with TPRN. TPRN, CLIC5 and PTPQR form concentric rings at the base of stereocilia and may form a complex.

It is found in the cell projection. It localises to the stereocilium. Its subcellular location is the apical cell membrane. The protein resides in the basal cell membrane. It carries out the reaction a 1,2-diacyl-sn-glycero-3-phospho-(1D-myo-inositol-3,4,5-trisphosphate) + H2O = a 1,2-diacyl-sn-glycero-3-phospho-(1D-myo-inositol-4,5-bisphosphate) + phosphate. It catalyses the reaction a 1,2-diacyl-sn-glycero-3-phospho-(1D-myo-inositol-3,4,5-trisphosphate) + H2O = a 1,2-diacyl-sn-glycero-3-phospho-(1D-myo-inositol-3,4-bisphosphate) + phosphate. The catalysed reaction is a 1,2-diacyl-sn-glycero-3-phospho-(1D-myo-inositol-3,5-bisphosphate) + H2O = a 1,2-diacyl-sn-glycero-3-phospho-(1D-myo-inositol-5-phosphate) + phosphate. The enzyme catalyses a 1,2-diacyl-sn-glycero-3-phospho-(1D-myo-inositol-3,5-bisphosphate) + H2O = a 1,2-diacyl-sn-glycero-3-phospho-(1D-myo-inositol-3-phosphate) + phosphate. It carries out the reaction a 1,2-diacyl-sn-glycero-3-phospho-(1D-myo-inositol-4,5-bisphosphate) + H2O = a 1,2-diacyl-sn-glycero-3-phospho-(1D-myo-inositol 4-phosphate) + phosphate. Dephosphorylates phosphatidylinositol phosphates, such as phosphatidylinositol 3,4,5-trisphosphate (PIP3) and phosphatidylinositol 3,5-diphosphates, with preference for PIP3. Phosphate can be hydrolyzed from the D3 and D5 positions in the inositol ring. Has low tyrosine-protein phosphatase activity in vitro; however, the relevance of such activity in vivo is unclear. Plays an important role in adipogenesis of mesenchymal stem cells (MSCs). Regulates the phosphorylation state of AKT1 by regulating the levels of PIP3 level in MSCs and preadipocyte cells. Required for hair bundle maturation, a process that enables hair cells to detect and transmit sound and balance signals effectively, therefore affecting auditory function. May act by regulating the level of phosphatidylinositol 4,5-bisphosphate (PIP2) level in the basal region of hair bundles. This Rattus norvegicus (Rat) protein is Phosphatidylinositol phosphatase PTPRQ (Ptprq).